We begin with the raw amino-acid sequence, 657 residues long: uncharacterized protein (657 aa).

Positions 1 to 26 (MFGKGLVKKSLLFFSGVSTMAVFLVS) are cleaved as a signal peptide. Cys27 is lipidated: N-palmitoyl cysteine. Cys27 is lipidated: S-diacylglycerol cysteine. 3 disordered regions span residues 291-316 (ISPKQGSDNNSNLSIDDHKSGSFSST), 468-496 (RLSSDDTNTKKALKEVSTHKNGSDKDGII), and 516-563 (KSMT…KETN). Over residues 294 to 304 (KQGSDNNSNLS) the composition is skewed to polar residues. Residues 469-495 (LSSDDTNTKKALKEVSTHKNGSDKDGI) are compositionally biased toward basic and acidic residues. Polar residues predominate over residues 516–525 (KSMTDNNSGT). Basic and acidic residues predominate over residues 526–545 (EQKKNLSEVDTKKKEKESKG). The segment covering 546-559 (KTQSNGQDSGQQNG) has biased composition (low complexity).

To T.pallidum TmpC.

It localises to the cell membrane. This is an uncharacterized protein from Mycoplasma pneumoniae (strain ATCC 29342 / M129 / Subtype 1) (Mycoplasmoides pneumoniae).